The chain runs to 488 residues: Argininosuccinate lyase (488 aa).

It belongs to the lyase 1 family. Argininosuccinate lyase subfamily.

It is found in the cytoplasm. It catalyses the reaction 2-(N(omega)-L-arginino)succinate = fumarate + L-arginine. It participates in amino-acid biosynthesis; L-arginine biosynthesis; L-arginine from L-ornithine and carbamoyl phosphate: step 3/3. This is Argininosuccinate lyase from Corynebacterium jeikeium (strain K411).